We begin with the raw amino-acid sequence, 356 residues long: MAEFFAAPFWTDFLWPLIVMVAQSVLLLVVLLIAIAYILLADRKIWAAVQIRRGPNVVGPWGLLQSFADLLKFVLKEPIIPSGSNKGVFLLAPLVTCVLALAAWAVIPVNLNWVISDINVGILYIFAISSLSIYGIIMAGWSSNSKYPFLAALRSAAQMVSYEVSIGFVFITVLLCAGSLNLSAIVEAQHVRGLGSLIGLPWLTFLNWYWLPLLPMFVVFYVSALAETNRPPFDLVEAESELVAGFMVEYGSTPYLLFMLGEYVAITTMCAMGAILFMGGWLPPIDLPPFNWVPGVIWFSLKLFFMFFLFAMAKAIVPRYRYDQLMRLGWKVFLPLSLAMVVIVAGVLQFADIAPK.

Transmembrane regions (helical) follow at residues 18–38 (IVMVAQSVLLLVVLLIAIAYI), 87–107 (GVFLLAPLVTCVLALAAWAVI), 120–140 (VGILYIFAISSLSIYGIIMAG), 166–186 (IGFVFITVLLCAGSLNLSAIV), 202–222 (WLTFLNWYWLPLLPMFVVFYV), 265–285 (AITTMCAMGAILFMGGWLPPI), 292–312 (WVPGVIWFSLKLFFMFFLFAM), and 328–348 (LGWKVFLPLSLAMVVIVAGVL).

The protein belongs to the complex I subunit 1 family. NDH-1 is composed of 14 different subunits. Subunits NuoA, H, J, K, L, M, N constitute the membrane sector of the complex.

It localises to the cell inner membrane. The catalysed reaction is a quinone + NADH + 5 H(+)(in) = a quinol + NAD(+) + 4 H(+)(out). In terms of biological role, NDH-1 shuttles electrons from NADH, via FMN and iron-sulfur (Fe-S) centers, to quinones in the respiratory chain. The immediate electron acceptor for the enzyme in this species is believed to be ubiquinone. Couples the redox reaction to proton translocation (for every two electrons transferred, four hydrogen ions are translocated across the cytoplasmic membrane), and thus conserves the redox energy in a proton gradient. This subunit may bind ubiquinone. In Nitrobacter hamburgensis (strain DSM 10229 / NCIMB 13809 / X14), this protein is NADH-quinone oxidoreductase subunit H.